The chain runs to 287 residues: Octanoyl-[GcvH]:protein N-octanoyltransferase (287 aa).

The BPL/LPL catalytic domain occupies 45 to 253 (GESPATARSW…ELKELSGRLY (209 aa)). Residue cysteine 150 is the Acyl-thioester intermediate of the active site.

Belongs to the octanoyltransferase LipL family.

It catalyses the reaction N(6)-octanoyl-L-lysyl-[glycine-cleavage complex H protein] + L-lysyl-[lipoyl-carrier protein] = N(6)-octanoyl-L-lysyl-[lipoyl-carrier protein] + L-lysyl-[glycine-cleavage complex H protein]. The protein operates within protein modification; protein lipoylation via endogenous pathway; protein N(6)-(lipoyl)lysine from octanoyl-[acyl-carrier-protein]. Functionally, catalyzes the amidotransfer (transamidation) of the octanoyl moiety from octanoyl-GcvH to the lipoyl domain of the E2 subunit of lipoate-dependent enzymes. The chain is Octanoyl-[GcvH]:protein N-octanoyltransferase from Bacillus velezensis (strain DSM 23117 / BGSC 10A6 / LMG 26770 / FZB42) (Bacillus amyloliquefaciens subsp. plantarum).